The following is a 170-amino-acid chain: Small ribosomal subunit protein bS16 (170 aa).

Residues Ala-109 to Glu-170 form a disordered region. Basic and acidic residues predominate over residues Ala-131–Ala-150. Positions Glu-151–Glu-170 are enriched in low complexity.

The protein belongs to the bacterial ribosomal protein bS16 family.

In Mycolicibacterium gilvum (strain PYR-GCK) (Mycobacterium gilvum (strain PYR-GCK)), this protein is Small ribosomal subunit protein bS16.